The following is a 154-amino-acid chain: NADPH-dependent 7-cyano-7-deazaguanine reductase (154 aa).

Residues 1-13 show a composition bias toward polar residues; the sequence is MSKTDVSGLSQLG. The tract at residues 1-24 is disordered; it reads MSKTDVSGLSQLGRQVDAPTSPET. Residue Cys-52 is the Thioimide intermediate of the active site. Asp-59 functions as the Proton donor in the catalytic mechanism. Residues 74 to 76 and 93 to 94 each bind substrate; these read VES and HE.

This sequence belongs to the GTP cyclohydrolase I family. QueF type 1 subfamily.

It is found in the cytoplasm. It carries out the reaction 7-aminomethyl-7-carbaguanine + 2 NADP(+) = 7-cyano-7-deazaguanine + 2 NADPH + 3 H(+). It functions in the pathway tRNA modification; tRNA-queuosine biosynthesis. Functionally, catalyzes the NADPH-dependent reduction of 7-cyano-7-deazaguanine (preQ0) to 7-aminomethyl-7-deazaguanine (preQ1). In Allorhizobium ampelinum (strain ATCC BAA-846 / DSM 112012 / S4) (Agrobacterium vitis (strain S4)), this protein is NADPH-dependent 7-cyano-7-deazaguanine reductase.